A 110-amino-acid chain; its full sequence is uncharacterized protein (110 aa).

A helical membrane pass occupies residues 18–34; the sequence is MFPLISTFTSIGLGVLM.

It localises to the membrane. This is an uncharacterized protein from Saccharomyces cerevisiae (strain ATCC 204508 / S288c) (Baker's yeast).